A 317-amino-acid polypeptide reads, in one-letter code: Melanocyte-stimulating hormone receptor (317 aa).

The Extracellular portion of the chain corresponds to 1–37 (MPMQGAQKRLLGSLNSTPTATPNLGLAANHTGAPCLE). N-linked (GlcNAc...) asparagine glycosylation is present at Asn-29. A helical membrane pass occupies residues 38 to 63 (VSIPDGLFLSLGLVSLVENVLVVAAI). The Cytoplasmic portion of the chain corresponds to 64–72 (AKNRNLHSP). A helical transmembrane segment spans residues 73–93 (MYCFICCLALSDLLVSSSNML). The Extracellular segment spans residues 94–118 (ETAVILLLEAGALATRASVVQQLQN). Residues 119–140 (TIDVLTCSSMLCSLCFLGAIAV) form a helical membrane-spanning segment. At 141 to 163 (DRHVSIFYALRYHSIMTLARARR) the chain is on the cytoplasmic side. A helical transmembrane segment spans residues 164-183 (AIAAIWVASVLSSTLFIAYC). The Extracellular segment spans residues 184 to 191 (DHAXVLLC). The helical transmembrane segment at 192 to 211 (LVVFFLAMLVLMAVLYVHML) threads the bilayer. At 212–240 (ARACQHAQGITRLHQRQPPAHQGFGFRGA) the chain is on the cytoplasmic side. A helical membrane pass occupies residues 241 to 266 (ATLTILLGIFFLCWGPFFLHLTLVVL). Residues 267-279 (CPQHLTCSCIFKN) are Extracellular-facing. The helical transmembrane segment at 280 to 300 (FKVFLTLIICSTIIDPLIYAF) threads the bilayer. The Cytoplasmic segment spans residues 301–317 (RSQELRRTLKELLLCSW). Residue Cys-315 is the site of S-palmitoyl cysteine attachment.

Belongs to the G-protein coupled receptor 1 family. Interacts with MGRN1, but does not undergo MGRN1-mediated ubiquitination; this interaction competes with GNAS-binding and thus inhibits agonist-induced cAMP production. Interacts with OPN3; the interaction results in a decrease in MC1R-mediated cAMP signaling and ultimately a decrease in melanin production in melanocytes.

It is found in the cell membrane. Functionally, receptor for MSH (alpha, beta and gamma) and ACTH. The activity of this receptor is mediated by G proteins which activate adenylate cyclase. Mediates melanogenesis, the production of eumelanin (black/brown) and phaeomelanin (red/yellow), via regulation of cAMP signaling in melanocytes. The chain is Melanocyte-stimulating hormone receptor (MC1R) from Ateles paniscus (Black spider monkey).